A 1388-amino-acid polypeptide reads, in one-letter code: DNA-directed RNA polymerase subunit beta (1388 aa).

The protein belongs to the RNA polymerase beta chain family. The RNAP catalytic core consists of 2 alpha, 1 beta, 1 beta' and 1 omega subunit. When a sigma factor is associated with the core the holoenzyme is formed, which can initiate transcription.

It catalyses the reaction RNA(n) + a ribonucleoside 5'-triphosphate = RNA(n+1) + diphosphate. In terms of biological role, DNA-dependent RNA polymerase catalyzes the transcription of DNA into RNA using the four ribonucleoside triphosphates as substrates. The protein is DNA-directed RNA polymerase subunit beta of Xylella fastidiosa (strain 9a5c).